Here is a 511-residue protein sequence, read N- to C-terminus: HDIDKNKQETRPMKRNAVLVDGVVLNGPIIDSSSGEKFVEDVYRILMNELVYKASDINQKVCEWQEPEQLKKLLDLNIKDNGEPHEKLLQLCKNVIKYSVKTSHPRFFNQLYAGMDHYSLAARFITEALNPSVYTYEVSPVFILTEEAILKKMIEFLGWKEGDGIFSPGGSVSNMYAVNLARYKYCPDIKQKGLSSAPRLVMFTSEECHYSMKKAAAFLGIGTENVYFVKTDDRGKMIPEELENQIQRAKKEGAVPFLVSATSGTTVLGAFDPLDDIANICEKHKLWFHVDASWGGSALMSQKYRKRLHGIHRADSVAWNPHKMLMAGIQCCALLVRDNSGLLKRCHSAEATYLFQQDKFYDVQYDTGDKSIQCSRRADAFKFWMMWKALGTTGLEERINRALALTRYLASEIKKRDGFELLWEPEYANTCFWYIPPSFRNMEKGPEYWRKFSNVAPTIKERMMKKGSMMVGYQPHRDKVNFFRHIVISPQVSREDMDFVLDEIERLGRDL.

Position 323 is an N6-(pyridoxal phosphate)lysine (lysine 323).

It belongs to the group II decarboxylase family. Homodimer. It depends on pyridoxal 5'-phosphate as a cofactor.

The enzyme catalyses L-aspartate + H(+) = beta-alanine + CO2. The catalysed reaction is 3-sulfino-L-alanine + H(+) = hypotaurine + CO2. Catalyzes the decarboxylation of L-aspartate, 3-sulfino-L-alanine (cysteine sulfinic acid), and L-cysteate to beta-alanine, hypotaurine and taurine, respectively. The preferred substrate is L-aspartate. Does not exhibit any decarboxylation activity toward glutamate. The chain is Acidic amino acid decarboxylase GADL1 (gadl1) from Xenopus tropicalis (Western clawed frog).